The sequence spans 229 residues: MAKQPKRMQKWTGDVAATHALDEAVKLVKANANAKFDETVEIAVNLGVDPRHADQQVRGVVALPSGTGRDVRVAVIAKDAKAEEAKAAGAEVVGAEDLVERIQGGFMDFDRVIATPDMMALVGRLGKVLGPRGLMPNPRVGTVTPNVGQAVKDAKGGSIEFRVEKAGIVHAGIGKASFTEEQLTANVKAMVDALNKAKPSGAKGTYVKKVSLSSTMGPGFKIDVASLGV.

This sequence belongs to the universal ribosomal protein uL1 family. Part of the 50S ribosomal subunit.

Functionally, binds directly to 23S rRNA. The L1 stalk is quite mobile in the ribosome, and is involved in E site tRNA release. Its function is as follows. Protein L1 is also a translational repressor protein, it controls the translation of the L11 operon by binding to its mRNA. The protein is Large ribosomal subunit protein uL1 of Phenylobacterium zucineum (strain HLK1).